A 314-amino-acid chain; its full sequence is Olfactory receptor 1 (314 aa).

The Extracellular portion of the chain corresponds to 1–29 (MTERNQTVISQFLLLGLPIPPEHQHVFYA). A glycan (N-linked (GlcNAc...) asparagine) is linked at Asn5. The helical transmembrane segment at 30-50 (LFLSMYLTTVLGNLIIIILIL) threads the bilayer. At 51–59 (LDSHLHTPM) the chain is on the cytoplasmic side. Residues 60–81 (YLFLSNLSFSDLCFSSVTMPKL) form a helical membrane-spanning segment. Over 82 to 97 (LQNMQSQVPSIPYAGC) the chain is Extracellular. Cys97 and Cys179 are joined by a disulfide. A helical membrane pass occupies residues 98 to 118 (LSQIYFFLFFGDLGNFLLVAM). Residues 119–143 (AYDRYVAICFPLHYMSIMSPKLCVS) are Cytoplasmic-facing. The helical transmembrane segment at 144–164 (LVVLSWVLTTFHAMLHTLLMA) threads the bilayer. Residues 165–196 (RLSFCEDNVIPHFFCDMSALLKLACSDTRVNE) are Extracellular-facing. The helical transmembrane segment at 197-217 (VVIFIVVSLFLVLPFALIIMS) threads the bilayer. Residues 218–240 (YVRIVSSILKVPSSQGIYKAFST) lie on the Cytoplasmic side of the membrane. A helical transmembrane segment spans residues 241-261 (CGSHLSVVSLFYGTVIGLYLC). Residues 262-271 (PSSNNSTVKE) lie on the Extracellular side of the membrane. Asn265 and Asn266 each carry an N-linked (GlcNAc...) asparagine glycan. The helical transmembrane segment at 272-292 (TVMSLMYTVVTPMLNPFIYSL) threads the bilayer. The Cytoplasmic portion of the chain corresponds to 293 to 314 (RNRDIKGAMERIFCKRKIQLNL).

The protein belongs to the G-protein coupled receptor 1 family. As to expression, olfactory epithelium.

Its subcellular location is the cell membrane. Odorant receptor. Activated by a lily-derived aldehyde as well as other odorants. May signal through an inositol 1,4,5-trisphosphate (IP3) second messenger system. The protein is Olfactory receptor 1 of Rattus norvegicus (Rat).